A 219-amino-acid chain; its full sequence is 2-hydroxy-3-keto-5-methylthiopentenyl-1-phosphate phosphatase (219 aa).

Belongs to the HAD-like hydrolase superfamily. MtnX family.

The catalysed reaction is 2-hydroxy-5-methylsulfanyl-3-oxopent-1-enyl phosphate + H2O = 1,2-dihydroxy-5-(methylsulfanyl)pent-1-en-3-one + phosphate. It participates in amino-acid biosynthesis; L-methionine biosynthesis via salvage pathway; L-methionine from S-methyl-5-thio-alpha-D-ribose 1-phosphate: step 4/6. In terms of biological role, dephosphorylates 2-hydroxy-3-keto-5-methylthiopentenyl-1-phosphate (HK-MTPenyl-1-P) yielding 1,2-dihydroxy-3-keto-5-methylthiopentene (DHK-MTPene). The polypeptide is 2-hydroxy-3-keto-5-methylthiopentenyl-1-phosphate phosphatase (Bacillus cereus (strain ATCC 10987 / NRS 248)).